A 160-amino-acid polypeptide reads, in one-letter code: MRIGLFAVGRLKSGPEKDLAARYFDRFAKAGPAVGLELARVAEVAESRASNAETRKREEAAMLLKSLADGSILILLDERGKALDSEAFASLLGSYRDQGKRDLTIAIGGADGLDPSLYDRADATLCLGKMTWPHQLVRILIAEQLYRAVTILSGHPYHRV.

S-adenosyl-L-methionine contacts are provided by residues L76, G108, and 127-132 (LGKMTW).

Belongs to the RNA methyltransferase RlmH family. Homodimer.

The protein localises to the cytoplasm. It carries out the reaction pseudouridine(1915) in 23S rRNA + S-adenosyl-L-methionine = N(3)-methylpseudouridine(1915) in 23S rRNA + S-adenosyl-L-homocysteine + H(+). In terms of biological role, specifically methylates the pseudouridine at position 1915 (m3Psi1915) in 23S rRNA. The protein is Ribosomal RNA large subunit methyltransferase H of Rhizobium leguminosarum bv. trifolii (strain WSM2304).